Reading from the N-terminus, the 666-residue chain is Vicilin-like antimicrobial peptides 2-2 (666 aa).

The signal sequence occupies residues 1–27 (MAINTSNLCSLLFLLSLFLLSTTVSLA). 2 disordered regions span residues 161-191 (QQKRYEEQQREDEEKYEERMKEEDNKRDPQQ) and 221-251 (RQHGRGGDLINPQRGGSGRYEEGEEKQSDNP). Basic and acidic residues predominate over residues 239–251 (RYEEGEEKQSDNP). Cupin type-1 domains are found at residues 271 to 410 (SVLE…ERLR) and 455 to 625 (YNLF…KEVE).

It belongs to the 7S seed storage protein family.

The protein localises to the secreted. Its function is as follows. Antimicrobial peptides 2b, 2c and 2d have antibacterial and antifungal activity against a range of species. The chain is Vicilin-like antimicrobial peptides 2-2 from Macadamia integrifolia (Macadamia nut).